Here is a 368-residue protein sequence, read N- to C-terminus: Protein mab-21-like (368 aa).

It belongs to the mab-21 family.

In Drosophila pseudoobscura pseudoobscura (Fruit fly), this protein is Protein mab-21-like.